The primary structure comprises 2382 residues: Highly reducing polyketide synthase srdA (2382 aa).

The segment at 1-25 (MAPHSTLDSDYSSGSSTPTSASAAG) is disordered. Residues 44-474 (QEPIAIIGMG…GANAHAILEA (431 aa)) form the Ketosynthase family 3 (KS3) domain. Active-site for beta-ketoacyl synthase activity residues include Cys217, His352, and His390. Positions 580–891 (VFTGQGAQWP…HYGSALSRGK (312 aa)) are malonyl-CoA:ACP transacylase (MAT) domain. The active-site For malonyltransferase activity is Ser672. The N-terminal hotdog fold stretch occupies residues 971-1108 (HDLLGSQVHG…GLVKIDSAPA (138 aa)). Residues 971 to 1274 (HDLLGSQVHG…RQVSYQSGIQ (304 aa)) form a dehydratase (DH) domain region. Residues 971–1275 (HDLLGSQVHG…QVSYQSGIQQ (305 aa)) form the PKS/mFAS DH domain. Residue His1003 is the Proton acceptor; for dehydratase activity of the active site. Residues 1121–1275 (MEPQAPRTWY…QVSYQSGIQQ (155 aa)) form a C-terminal hotdog fold region. Asp1189 acts as the Proton donor; for dehydratase activity in catalysis. Residues 1668-1979 (GQIDSIFFRR…AKGHSGSVVV (312 aa)) form an enoyl reductase (ER) domain region. The interval 2004-2180 (SYLLVGCLGG…ATSIGLGMIS (177 aa)) is ketoreductase (KR) domain. Positions 2298-2376 (SVEDAVLKMI…LLSELITKKM (79 aa)) constitute a Carrier domain. An O-(pantetheine 4'-phosphoryl)serine modification is found at Ser2335.

In terms of biological role, highly reducing polyketide synthase; part of the gene cluster that mediates the biosynthesis of sordarial, a salicylic aldehyde structurally related to the phytotoxin pyriculol. The most interesting aspect of this pathway is formation of an aromatic product from the highly reducing polyketide synthase srdA. SrdA synthesizes a reduced polyketide chain from one molecule of acetyl-CoA and five molecules of malonyl-CoA. The polyketide chain is then reductively released as an aldehyde. The oxidoreductases srdC, srdD and srdE then oxidize one of the hydroxy groups to facilitate the intramolecular aldol condensation, followed by dehydration to yield a salicylic aldehyde. This aldehyde can undergo facile reduction by endogenous reductases to yield the alcohol 1-hydroxy-2-hydroxymethyl-3-pent-1,3-dienylbenzene. The flavin-dependent srdI counteract against the propensity of the aldehydes to be reduced under physiological conditions and is responsible for reoxidizing 1-hydroxy-2-hydroxymethyl-3-pent-1,3-dienylbenzene back to the salicylic aldehyde. This salicylic aldehyde is then selectively epoxidized by the cupin-domain-containing oxidoreductase srdB to yield the epoxide, which can be hydrolyzed stereoselectively by the hydrolase srdG to give the final product sordarial. This Neurospora crassa (strain ATCC 24698 / 74-OR23-1A / CBS 708.71 / DSM 1257 / FGSC 987) protein is Highly reducing polyketide synthase srdA.